We begin with the raw amino-acid sequence, 600 residues long: Elongation factor 4 (600 aa).

The region spanning 13–194 (DRIRNFCIIA…AIVERIPPPR (182 aa)) is the tr-type G domain. Residues 25 to 30 (DHGKST) and 141 to 144 (NKID) each bind GTP.

The protein belongs to the TRAFAC class translation factor GTPase superfamily. Classic translation factor GTPase family. LepA subfamily.

It is found in the cell membrane. The enzyme catalyses GTP + H2O = GDP + phosphate + H(+). Its function is as follows. Required for accurate and efficient protein synthesis under certain stress conditions. May act as a fidelity factor of the translation reaction, by catalyzing a one-codon backward translocation of tRNAs on improperly translocated ribosomes. Back-translocation proceeds from a post-translocation (POST) complex to a pre-translocation (PRE) complex, thus giving elongation factor G a second chance to translocate the tRNAs correctly. Binds to ribosomes in a GTP-dependent manner. In Rubrobacter xylanophilus (strain DSM 9941 / JCM 11954 / NBRC 16129 / PRD-1), this protein is Elongation factor 4.